The following is a 205-amino-acid chain: Guanylate kinase (205 aa).

Positions Gly5–Glu184 constitute a Guanylate kinase-like domain. Gly12 to Gly19 serves as a coordination point for ATP.

The protein belongs to the guanylate kinase family.

The protein resides in the cytoplasm. It carries out the reaction GMP + ATP = GDP + ADP. Essential for recycling GMP and indirectly, cGMP. This chain is Guanylate kinase, found in Listeria innocua serovar 6a (strain ATCC BAA-680 / CLIP 11262).